We begin with the raw amino-acid sequence, 333 residues long: Glycerol-3-phosphate dehydrogenase [NAD(P)+] (333 aa).

NADPH contacts are provided by tryptophan 11, arginine 34, and lysine 107. Positions 107, 136, and 138 each coordinate sn-glycerol 3-phosphate. Alanine 140 contacts NADPH. Lysine 191, aspartate 244, serine 254, arginine 255, and asparagine 256 together coordinate sn-glycerol 3-phosphate. Residue lysine 191 is the Proton acceptor of the active site. Arginine 255 contacts NADPH. Residues isoleucine 279 and glutamate 281 each contribute to the NADPH site.

Belongs to the NAD-dependent glycerol-3-phosphate dehydrogenase family.

It is found in the cytoplasm. The enzyme catalyses sn-glycerol 3-phosphate + NAD(+) = dihydroxyacetone phosphate + NADH + H(+). The catalysed reaction is sn-glycerol 3-phosphate + NADP(+) = dihydroxyacetone phosphate + NADPH + H(+). It functions in the pathway membrane lipid metabolism; glycerophospholipid metabolism. Its function is as follows. Catalyzes the reduction of the glycolytic intermediate dihydroxyacetone phosphate (DHAP) to sn-glycerol 3-phosphate (G3P), the key precursor for phospholipid synthesis. This chain is Glycerol-3-phosphate dehydrogenase [NAD(P)+], found in Nitrosospira multiformis (strain ATCC 25196 / NCIMB 11849 / C 71).